A 338-amino-acid polypeptide reads, in one-letter code: Lipoate-protein ligase A (338 aa).

The region spanning 29-216 (PATQRVLFLW…AFFAHYGERV (188 aa)) is the BPL/LPL catalytic domain. Residues arginine 71, 76-79 (GAVF), and lysine 134 contribute to the ATP site. Position 134 (lysine 134) interacts with (R)-lipoate.

The protein belongs to the LplA family. Monomer.

The protein resides in the cytoplasm. The enzyme catalyses L-lysyl-[lipoyl-carrier protein] + (R)-lipoate + ATP = N(6)-[(R)-lipoyl]-L-lysyl-[lipoyl-carrier protein] + AMP + diphosphate + H(+). Its pathway is protein modification; protein lipoylation via exogenous pathway; protein N(6)-(lipoyl)lysine from lipoate: step 1/2. It participates in protein modification; protein lipoylation via exogenous pathway; protein N(6)-(lipoyl)lysine from lipoate: step 2/2. Catalyzes both the ATP-dependent activation of exogenously supplied lipoate to lipoyl-AMP and the transfer of the activated lipoyl onto the lipoyl domains of lipoate-dependent enzymes. This is Lipoate-protein ligase A from Shigella dysenteriae serotype 1 (strain Sd197).